The sequence spans 457 residues: Cysteine--tRNA ligase (457 aa).

Cys-28 serves as a coordination point for Zn(2+). The 'HIGH' region motif lies at 30 to 40 (PTVYDTAHIGN). Residues Cys-212, His-237, and Glu-241 each coordinate Zn(2+). The short motif at 270–274 (KMSKS) is the 'KMSKS' region element. Residue Lys-273 participates in ATP binding.

The protein belongs to the class-I aminoacyl-tRNA synthetase family. Monomer. The cofactor is Zn(2+).

The protein resides in the cytoplasm. It catalyses the reaction tRNA(Cys) + L-cysteine + ATP = L-cysteinyl-tRNA(Cys) + AMP + diphosphate. This Wolbachia sp. subsp. Drosophila simulans (strain wRi) protein is Cysteine--tRNA ligase.